The sequence spans 97 residues: Large ribosomal subunit protein bL27 (97 aa).

A propeptide spanning residues 1 to 12 (MLNLNLANLQFM) is cleaved from the precursor. Positions 15-37 (KKGGGSTSNGRDSQAKRLGAKAA) are disordered.

Belongs to the bacterial ribosomal protein bL27 family. The N-terminus is cleaved by ribosomal processing cysteine protease Prp.

The protein is Large ribosomal subunit protein bL27 of Streptococcus suis (strain 98HAH33).